A 32-amino-acid polypeptide reads, in one-letter code: Protamine S4 (32 aa).

Positions 1-32 (GCKKRKARKRPKCKKARKRPKCKRRKVAKKKC) are disordered.

As to expression, testis.

It localises to the nucleus. Its subcellular location is the chromosome. Its function is as follows. Protamines substitute for histones in the chromatin of sperm during the haploid phase of spermatogenesis. They compact sperm DNA into a highly condensed, stable and inactive complex. This chain is Protamine S4, found in Scyliorhinus canicula (Small-spotted catshark).